Here is a 196-residue protein sequence, read N- to C-terminus: Protein kinase OspG (196 aa).

The protein belongs to the protein kinase superfamily. In terms of processing, autophosphorylated.

The protein resides in the secreted. It localises to the host cell. In terms of biological role, effector proteins function to alter host cell physiology and promote bacterial survival in host tissues. This protein is a kinase that is involved in down-regulation of the host innate response induced by invasive bacteria. This is Protein kinase OspG (ospG) from Shigella flexneri serotype X (strain 2002017).